The primary structure comprises 144 residues: Large ribosomal subunit protein uL15 (144 aa).

A disordered region spans residues 1 to 53; the sequence is MRLNSLSPAEGAKHSAKRLGRGIGSGLGKTGGRGHKGQKSRTGGGVRRGFEGG. Over residues 21 to 31 the composition is skewed to gly residues; it reads RGIGSGLGKTG.

The protein belongs to the universal ribosomal protein uL15 family. In terms of assembly, part of the 50S ribosomal subunit.

Binds to the 23S rRNA. The sequence is that of Large ribosomal subunit protein uL15 from Glaesserella parasuis serovar 5 (strain SH0165) (Haemophilus parasuis).